Here is a 121-residue protein sequence, read N- to C-terminus: uncharacterized protein (121 aa).

One can recognise an HTH gntR-type domain in the interval 9–77 (KPIYLQIADQ…RGQGTFIAEK (69 aa)). The segment at residues 37–56 (VREMAIQTKVNPNTIQRTYS) is a DNA-binding region (H-T-H motif).

This is an uncharacterized protein from Bacillus subtilis (strain 168).